The following is a 92-amino-acid chain: Alpha-conotoxin-like Mi20.2 (92 aa).

Positions 1 to 24 (MPKLEMMLLVLLILPLSSFSAAGE) are cleaved as a signal peptide. Positions 25–45 (QVVQGDQRSDGLARYLQRGGR) are excised as a propeptide. Glu49 bears the 4-carboxyglutamate mark. Residue Pro55 is modified to 4-hydroxyproline. 4 disulfide bridges follow: Cys63–Cys72, Cys68–Cys80, Cys73–Cys90, and Cys78–Cys92.

Belongs to the conotoxin D superfamily. As to quaternary structure, hetero-, homo- or pseudo-homodimer (identical sequence, different post-translational modifications). Expressed by the venom duct.

It is found in the secreted. Alpha-conotoxins act on postsynaptic membranes, they bind to the nicotinic acetylcholine receptors (nAChR) and thus inhibit them. Through its two C-terminal domains, this homodimeric protein would bind to two nAChR allosteric sites, located outside the nAChR C-loop of the principal binding face and at the adjacent binding interface in a clockwise direction. This toxin specifically blocks mammalian neuronal nAChR of the alpha-7/CHRNA7, alpha-3-beta-2/CHRNA3-CHRNB2 and alpha-4-beta-2/CHRNA4-CHRNB2 subtypes. In Conus miles (Soldier cone), this protein is Alpha-conotoxin-like Mi20.2.